The primary structure comprises 81 residues: Acyl carrier protein (81 aa).

The Carrier domain maps to 2–80 (SKVDNIEQKV…DVVNYIKEHK (79 aa)). An O-(pantetheine 4'-phosphoryl)serine modification is found at Ser40.

It belongs to the acyl carrier protein (ACP) family. 4'-phosphopantetheine is transferred from CoA to a specific serine of apo-ACP by AcpS. This modification is essential for activity because fatty acids are bound in thioester linkage to the sulfhydryl of the prosthetic group.

The protein resides in the cytoplasm. The protein operates within lipid metabolism; fatty acid biosynthesis. Carrier of the growing fatty acid chain in fatty acid biosynthesis. The protein is Acyl carrier protein of Rickettsia bellii (strain OSU 85-389).